Consider the following 381-residue polypeptide: Transaldolase 1 (381 aa).

Catalysis depends on K149, which acts as the Schiff-base intermediate with substrate.

Belongs to the transaldolase family. Type 2 subfamily.

The protein localises to the cytoplasm. The enzyme catalyses D-sedoheptulose 7-phosphate + D-glyceraldehyde 3-phosphate = D-erythrose 4-phosphate + beta-D-fructose 6-phosphate. Its pathway is carbohydrate degradation; pentose phosphate pathway; D-glyceraldehyde 3-phosphate and beta-D-fructose 6-phosphate from D-ribose 5-phosphate and D-xylulose 5-phosphate (non-oxidative stage): step 2/3. Its function is as follows. Transaldolase is important for the balance of metabolites in the pentose-phosphate pathway. The chain is Transaldolase 1 (tal1) from Streptomyces coelicolor (strain ATCC BAA-471 / A3(2) / M145).